The following is a 498-amino-acid chain: ADP,ATP carrier protein 1 (498 aa).

Topologically, residues 1–33 are cytoplasmic; the sequence is MSTSKSENYLSELRKIIWPIEQYENKKFLPLAF. Residues 34-54 form a helical membrane-spanning segment; that stretch reads MMFCILLNYSTLRSIKDGFVV. Cys-37 and Cys-85 are joined by a disulfide. Residues 55–67 lie on the Extracellular side of the membrane; sequence TDIGTESISFLKT. Residues 68–88 form a helical membrane-spanning segment; that stretch reads YIVLPSAVIAMIIYVKLCDIL. Residues 89-92 lie on the Cytoplasmic side of the membrane; the sequence is KQEN. Residues 93–113 traverse the membrane as a helical segment; the sequence is VFYVITSFFLGYFALFAFVLY. At 114–147 the chain is on the extracellular side; sequence PYPDLVHPDHKTIESLSLAYPNFKWFIKIVGKWS. The helical transmembrane segment at 148–168 threads the bilayer; sequence FASFYTIAELWGTMMLSLLFW. Residues 169–184 lie on the Cytoplasmic side of the membrane; that stretch reads QFANQITKIAEAKRFY. A helical transmembrane segment spans residues 185–205; it reads SMFGLLANLALPVTSVVIGYF. Residues 206 to 218 are Extracellular-facing; it reads LHEKTQIVAEHLK. The chain crosses the membrane as a helical span at residues 219–239; it reads FVPLFVIMITSSFLIILTYRW. The Cytoplasmic segment spans residues 240 to 279; the sequence is MNKNVLTDPRLYDPALVKEKKTKAKLSFIESLKMIFTSKY. A helical membrane pass occupies residues 280–300; sequence VGYIALLIIAYGVSVNLVEGV. At 301-320 the chain is on the extracellular side; sequence WKSKVKELYPTKEAYTIYMG. The chain crosses the membrane as a helical span at residues 321–341; that stretch reads QFQFYQGWVAIAFMLIGSNIL. Over 342–348 the chain is Cytoplasmic; sequence RKVSWLT. A helical transmembrane segment spans residues 349–369; that stretch reads AAMITPLMMFITGAAFFSFIF. The Extracellular portion of the chain corresponds to 370 to 379; it reads FDSVIAMNLT. Residues 380 to 400 traverse the membrane as a helical segment; that stretch reads GILASSPLTLAVMIGMIQNVL. Topologically, residues 401–438 are cytoplasmic; it reads SKGVKYSLFDATKNMAYIPLDKDLRVKGQAAVEVIGGR. 436–442 contacts ATP; sequence GGRLGKS. The helical transmembrane segment at 439–459 threads the bilayer; the sequence is LGKSGGAIIQSTFFILFPVFG. Over 460 to 465 the chain is Extracellular; the sequence is FIEATP. A helical membrane pass occupies residues 466 to 486; it reads YFASIFFIIVILWIFAVKGLN. Over 487–498 the chain is Cytoplasmic; that stretch reads KEYQVLVNKNEK.

This sequence belongs to the ADP/ATP translocase tlc family.

It is found in the cell membrane. Provides the rickettsial cell with host ATP in exchange for rickettsial ADP. This is an obligate exchange system. This energy acquiring activity is an important component of rickettsial parasitism. The polypeptide is ADP,ATP carrier protein 1 (tlcA) (Rickettsia prowazekii (strain Madrid E)).